Consider the following 204-residue polypeptide: Thymidylate kinase (204 aa).

11-18 provides a ligand contact to ATP; sequence GLDKSGKT.

This sequence belongs to the thymidylate kinase family.

The catalysed reaction is dTMP + ATP = dTDP + ADP. It participates in pyrimidine metabolism; dTTP biosynthesis. The chain is Thymidylate kinase (TMK) from Rabbitpox virus (strain Utrecht) (RPV).